The sequence spans 233 residues: H-2 class II histocompatibility antigen, A-F alpha chain (233 aa).

The alpha-1 stretch occupies residues 1-88 (EDDIEADHVG…KRSNFTPATN (88 aa)). Residues 1-195 (EDDIEADHVG…IPAPMSELTE (195 aa)) are Extracellular-facing. Residues 89 to 182 (EAPQATVFPK…GLEEPVLKHW (94 aa)) are alpha-2. The 93-residue stretch at 91–183 (PQATVFPKSP…LEEPVLKHWE (93 aa)) folds into the Ig-like C1-type domain. A disulfide bridge links C111 with C167. N122 is a glycosylation site (N-linked (GlcNAc...) asparagine). Residues 183 to 195 (EPEIPAPMSELTE) form a connecting peptide region. Residues 196–221 (TVVCALGLSVGLVGIVVGTIFIIQGL) form a helical membrane-spanning segment. Residues 222-233 (RSGGTSRHPGPL) lie on the Cytoplasmic side of the membrane.

This sequence belongs to the MHC class II family.

It is found in the membrane. The chain is H-2 class II histocompatibility antigen, A-F alpha chain (H2-Aa) from Mus musculus (Mouse).